We begin with the raw amino-acid sequence, 456 residues long: tRNA-2-methylthio-N(6)-dimethylallyladenosine synthase (456 aa).

An MTTase N-terminal domain is found at 19–136 (LTFNVQTFGC…LAELIYARHT (118 aa)). The [4Fe-4S] cluster site is built by Cys-28, Cys-63, Cys-97, Cys-173, Cys-177, and Cys-180. The region spanning 159–389 (QKYKFKAGVN…LTTIRESSSK (231 aa)) is the Radical SAM core domain. The TRAM domain occupies 392–455 (KDDEGKIAEV…GFYYMGEMME (64 aa)).

This sequence belongs to the methylthiotransferase family. MiaB subfamily. As to quaternary structure, monomer. [4Fe-4S] cluster serves as cofactor.

The protein resides in the cytoplasm. It catalyses the reaction N(6)-dimethylallyladenosine(37) in tRNA + (sulfur carrier)-SH + AH2 + 2 S-adenosyl-L-methionine = 2-methylsulfanyl-N(6)-dimethylallyladenosine(37) in tRNA + (sulfur carrier)-H + 5'-deoxyadenosine + L-methionine + A + S-adenosyl-L-homocysteine + 2 H(+). In terms of biological role, catalyzes the methylthiolation of N6-(dimethylallyl)adenosine (i(6)A), leading to the formation of 2-methylthio-N6-(dimethylallyl)adenosine (ms(2)i(6)A) at position 37 in tRNAs that read codons beginning with uridine. The polypeptide is tRNA-2-methylthio-N(6)-dimethylallyladenosine synthase (Lachnoclostridium phytofermentans (strain ATCC 700394 / DSM 18823 / ISDg) (Clostridium phytofermentans)).